Here is a 238-residue protein sequence, read N- to C-terminus: Adapter protein MecA (238 aa).

The span at 120–136 (QQQKDNKQNQDQNERNR) shows a compositional bias: basic and acidic residues. The tract at residues 120–139 (QQQKDNKQNQDQNERNRQNT) is disordered.

Belongs to the MecA family. As to quaternary structure, homodimer.

Functionally, enables the recognition and targeting of unfolded and aggregated proteins to the ClpC protease or to other proteins involved in proteolysis. The chain is Adapter protein MecA from Staphylococcus saprophyticus subsp. saprophyticus (strain ATCC 15305 / DSM 20229 / NCIMB 8711 / NCTC 7292 / S-41).